The chain runs to 466 residues: Chromosomal replication initiator protein DnaA (466 aa).

The tract at residues 1-86 is domain I, interacts with DnaA modulators; the sequence is MSLSLWQQCL…EVGTKPVTQT (86 aa). The interval 86–129 is domain II; it reads TLKTPVHNVVAPTQTTTAQPQRVAPAARSGWDNVPAPAEPTYRS. Residues 130–346 are domain III, AAA+ region; the sequence is NVNVKHTFDN…GALNRVIANA (217 aa). ATP-binding residues include glycine 174, glycine 176, lysine 177, and threonine 178. Residues 347 to 466 form a domain IV, binds dsDNA region; the sequence is NFTGRAITID…FSNLIRTLSS (120 aa).

This sequence belongs to the DnaA family. As to quaternary structure, oligomerizes as a right-handed, spiral filament on DNA at oriC.

It is found in the cytoplasm. Functionally, plays an essential role in the initiation and regulation of chromosomal replication. ATP-DnaA binds to the origin of replication (oriC) to initiate formation of the DNA replication initiation complex once per cell cycle. Binds the DnaA box (a 9 base pair repeat at the origin) and separates the double-stranded (ds)DNA. Forms a right-handed helical filament on oriC DNA; dsDNA binds to the exterior of the filament while single-stranded (ss)DNA is stabiized in the filament's interior. The ATP-DnaA-oriC complex binds and stabilizes one strand of the AT-rich DNA unwinding element (DUE), permitting loading of DNA polymerase. After initiation quickly degrades to an ADP-DnaA complex that is not apt for DNA replication. Binds acidic phospholipids. This chain is Chromosomal replication initiator protein DnaA, found in Salmonella dublin (strain CT_02021853).